A 182-amino-acid polypeptide reads, in one-letter code: MVQEKAEIMDQEKFNRTLTRISHEIIEKNKGIDDLVLIGIRTRGVPLAERLAHKIEEIEGESIATGLLDITLYRDDLSTLSEKPILNKTEVPFSIKNKKVVLVDDVLYTGRTARAALDAVIDLGRPKYIQLAVIVDRGHRELPIRADYVGKNVPTSKKELISVRLSEIDGEDRVMIEETVKE.

The PRPP-binding motif lies at 100 to 112; the sequence is VVLVDDVLYTGRT.

It belongs to the purine/pyrimidine phosphoribosyltransferase family. PyrR subfamily. In terms of assembly, homodimer and homohexamer; in equilibrium.

The catalysed reaction is UMP + diphosphate = 5-phospho-alpha-D-ribose 1-diphosphate + uracil. Its function is as follows. Regulates transcriptional attenuation of the pyrimidine nucleotide (pyr) operon by binding in a uridine-dependent manner to specific sites on pyr mRNA. This disrupts an antiterminator hairpin in the RNA and favors formation of a downstream transcription terminator, leading to a reduced expression of downstream genes. Functionally, also displays a weak uracil phosphoribosyltransferase activity which is not physiologically significant. The polypeptide is Bifunctional protein PyrR (Natranaerobius thermophilus (strain ATCC BAA-1301 / DSM 18059 / JW/NM-WN-LF)).